The chain runs to 337 residues: Calcium-binding protein 39-like (337 aa).

Belongs to the Mo25 family. As to quaternary structure, component of a trimeric complex composed of STK11/LKB1, STRAD (STRADA or STRADB) and CAB39/MO25 (CAB39/MO25alpha or CAB39L/MO25beta): the complex tethers STK11/LKB1 in the cytoplasm and stimulates its catalytic activity.

Component of a complex that binds and activates STK11/LKB1. In the complex, required to stabilize the interaction between CAB39/MO25 (CAB39/MO25alpha or CAB39L/MO25beta) and STK11/LKB1. This Mus musculus (Mouse) protein is Calcium-binding protein 39-like (Cab39l).